Consider the following 477-residue polypeptide: uncharacterized protein (477 aa).

Residues 1–18 (MWTALVLVWISSVPLSRS) form the signal peptide. Residues 19-427 (HTVPAVPRHL…DPLTPSLVNK (409 aa)) lie on the Extracellular side of the membrane. N-linked (GlcNAc...) asparagine glycosylation is found at Asn40, Asn51, and Asn77. 3 disordered regions span residues 79–103 (TRVT…GTAD), 239–366 (GTIN…TGGP), and 378–398 (KATA…DVKV). The segment covering 85-97 (TTPHGTNTSTPTT) has biased composition (low complexity). Composition is skewed to polar residues over residues 253 to 288 (PAKS…QPVH) and 298 to 309 (PSNTTLEPNTPK). Asn300 carries an N-linked (GlcNAc...) asparagine glycan. Low complexity-rich tracts occupy residues 310 to 326 (SVAS…QVQT), 348 to 361 (TSPT…LPTQ), and 378 to 393 (KATA…SRSS). The chain crosses the membrane as a helical span at residues 428–448 (MFLLVVLIVGVTLFIAVLMMF). Over 449 to 477 (ALQAYESYKKKDYTQVDYLINGMYADSEM) the chain is Cytoplasmic.

The protein resides in the cell membrane. The protein localises to the golgi apparatus. Its subcellular location is the trans-Golgi network membrane. This is an uncharacterized protein from Rattus norvegicus (Rat).